A 107-amino-acid chain; its full sequence is Large ribosomal subunit protein uL24 (107 aa).

Belongs to the universal ribosomal protein uL24 family. In terms of assembly, part of the 50S ribosomal subunit.

Its function is as follows. One of two assembly initiator proteins, it binds directly to the 5'-end of the 23S rRNA, where it nucleates assembly of the 50S subunit. In terms of biological role, one of the proteins that surrounds the polypeptide exit tunnel on the outside of the subunit. The protein is Large ribosomal subunit protein uL24 of Coxiella burnetii (strain Dugway 5J108-111).